Consider the following 436-residue polypeptide: Prenyltransferase nscD (436 aa).

Belongs to the tryptophan dimethylallyltransferase family.

It participates in secondary metabolite biosynthesis. In terms of biological role, prenyltransferase; part of the gene cluster that mediates the biosynthesis of neosartoricin B, a prenylated anthracenone that probably exhibits T-cell antiproliferative activity, suggestive of a physiological role as an immunosuppressive agent. The non-reducing polyketide synthase nscA probably synthesizes and cyclizes the decaketide backbone. The hydrolase nscB then mediates the product release through hydrolysis followed by spontaneous decarboxylation. The prenyltransferase nscD catalyzes the addition of the dimethylallyl group to the aromatic C5. The FAD-dependent monooxygenase nscC is then responsible for the stereospecific hydroxylation at C2. Neosartoricin B can be converted into two additional compounds neosartoricins C and D. Neosartoricin C is a spirocyclic compound that is cyclized through the attack of C3 hydroxyl on C14, followed by dehydration. On the other hand, neosartoricin D is a further cyclized compound in which attack of C2 on C14 in neosartoricin C results in the formation of the acetal-containing dioxabicyclo-octanone ring. Both of these compounds are novel and possibly represent related metabolites of the gene cluster. This chain is Prenyltransferase nscD, found in Trichophyton equinum (strain ATCC MYA-4606 / CBS 127.97) (Horse ringworm fungus).